The primary structure comprises 538 residues: Atos homolog protein B (538 aa).

Over residues 1-18 the composition is skewed to low complexity; it reads MRHVQAEPSPSSEPEAGP. Disordered regions lie at residues 1–114 and 133–300; these read MRHV…LGVA and TSSW…VLDP. Residues 227 to 238 show a composition bias toward pro residues; it reads HTPPGPGPPGPC. Residues S254 and S255 each carry the phosphoserine modification. The tract at residues 348–430 is required for macropage invasion; that stretch reads LLGNFEESLL…VPKVGTVQVT (83 aa). Residues 436–444 form a transactivation domain 1 (TAD1) region; sequence QTVVKMFLV.

Belongs to the ATOS family.

The protein localises to the nucleus. Functionally, transcription regulator that may syncronize transcriptional and translational programs. The polypeptide is Atos homolog protein B (Homo sapiens (Human)).